We begin with the raw amino-acid sequence, 411 residues long: Serine hydroxymethyltransferase (411 aa).

(6S)-5,6,7,8-tetrahydrofolate contacts are provided by residues Leu-119 and Gly-123–Leu-125. An N6-(pyridoxal phosphate)lysine modification is found at Lys-228.

Belongs to the SHMT family. Homodimer. It depends on pyridoxal 5'-phosphate as a cofactor.

The protein resides in the cytoplasm. It catalyses the reaction (6R)-5,10-methylene-5,6,7,8-tetrahydrofolate + glycine + H2O = (6S)-5,6,7,8-tetrahydrofolate + L-serine. Its pathway is one-carbon metabolism; tetrahydrofolate interconversion. It participates in amino-acid biosynthesis; glycine biosynthesis; glycine from L-serine: step 1/1. Its function is as follows. Catalyzes the reversible interconversion of serine and glycine with tetrahydrofolate (THF) serving as the one-carbon carrier. This reaction serves as the major source of one-carbon groups required for the biosynthesis of purines, thymidylate, methionine, and other important biomolecules. Also exhibits THF-independent aldolase activity toward beta-hydroxyamino acids, producing glycine and aldehydes, via a retro-aldol mechanism. This chain is Serine hydroxymethyltransferase, found in Clostridium kluyveri (strain NBRC 12016).